The sequence spans 106 residues: uncharacterized protein (106 aa).

Positions 1 to 93 (MSIFYVLGKK…WEAKWKEAKI (93 aa)) constitute an HTH hxlR-type domain.

This is an uncharacterized protein from Methanocaldococcus jannaschii (strain ATCC 43067 / DSM 2661 / JAL-1 / JCM 10045 / NBRC 100440) (Methanococcus jannaschii).